Here is a 297-residue protein sequence, read N- to C-terminus: Mitochondrial nicotinamide adenine dinucleotide transporter SLC25A51 (297 aa).

Basic and acidic residues predominate over residues 1–11 (MMDSEAHEKRP). The tract at residues 1-20 (MMDSEAHEKRPPILTSSKQD) is disordered. Solcar repeat units follow at residues 28–108 (VGEM…LSCL), 116–200 (PEFA…IKEH), and 213–296 (NDFI…LLKV). Transmembrane regions (helical) follow at residues 36 to 56 (CGCCAAFNNVAITFPIQKVLF), 85 to 105 (LPPLMQKTTTLALMFGLYEDL), 116 to 135 (PEFATSGVAAVLAGTTEAIF), 179 to 199 (ILFRNGLSNVLFFGLRGPIKE), 215 to 235 (FICGGLLGAMLGFLFFPINVV), and 268 to 289 (LFRGAHLNYHRSLISWGIINAT).

The protein belongs to the mitochondrial carrier (TC 2.A.29) family.

It localises to the mitochondrion inner membrane. The enzyme catalyses NAD(+)(in) = NAD(+)(out). Its function is as follows. Mitochondrial membrane carrier protein that mediates the import of NAD(+) into mitochondria. Mitochondrial NAD(+) is required for glycolysis and mitochondrial respiration. Compared to SLC25A52, SLC25A51-mediated transport is essential for the import of NAD(+) in mitochondria. The transport mechanism, uniport or antiport, its electrogenicity and substrate selectivity, remain to be elucidated. The protein is Mitochondrial nicotinamide adenine dinucleotide transporter SLC25A51 of Homo sapiens (Human).